The primary structure comprises 299 residues: Virginiamycin B lyase (299 aa).

A substrate-binding site is contributed by His229. Mg(2+) is bound at residue Glu269. The active-site Proton acceptor is the His271. Residue Glu286 coordinates Mg(2+).

The protein belongs to the Vgb family. Monomer. Mg(2+) is required as a cofactor.

In terms of biological role, inactivates the type B streptogramin antibiotics by linearizing the lactone ring at the ester linkage, generating a free phenylglycine carboxylate and converting the threonyl moiety into 2-amino-butenoic acid. The sequence is that of Virginiamycin B lyase from Bordetella parapertussis (strain 12822 / ATCC BAA-587 / NCTC 13253).